The primary structure comprises 159 residues: Succinate dehydrogenase [ubiquinone] cytochrome b small subunit, mitochondrial (159 aa).

Residues 1 to 56 constitute a mitochondrion transit peptide; the sequence is MAVLWRLSAVCGALGGRALLLRTPVVRPAHISAFLQDRPIPEWCGVQHIHLSPSHH. At 57–63 the chain is on the mitochondrial matrix side; the sequence is SGSKAAS. The helical transmembrane segment at 64–85 threads the bilayer; sequence LHWTSERVVSVLLLGLLPAAYL. Residues 86-90 lie on the Mitochondrial intermembrane side of the membrane; sequence NPCSA. The chain crosses the membrane as a helical span at residues 91-111; it reads MDYSLAAALTLHGHWGLGQVV. Residue histidine 102 coordinates heme b. At 112–122 the chain is on the mitochondrial matrix side; the sequence is TDYVHGDALQK. Tyrosine 114 contributes to the a ubiquinone binding site. The chain crosses the membrane as a helical span at residues 123–144; that stretch reads AAKAGLLALSALTFAGLCYFNY. Residues 145-159 lie on the Mitochondrial intermembrane side of the membrane; sequence HDVGICKAVAMLWKL.

It belongs to the CybS family. Component of complex II composed of four subunits: the flavoprotein (FP) SDHA, iron-sulfur protein (IP) SDHB, and a cytochrome b560 composed of SDHC and SDHD.

It localises to the mitochondrion inner membrane. It functions in the pathway carbohydrate metabolism; tricarboxylic acid cycle. In terms of biological role, membrane-anchoring subunit of succinate dehydrogenase (SDH) that is involved in complex II of the mitochondrial electron transport chain and is responsible for transferring electrons from succinate to ubiquinone (coenzyme Q). SDH also oxidizes malate to the non-canonical enol form of oxaloacetate, enol-oxaloacetate. Enol-oxaloacetate, which is a potent inhibitor of the succinate dehydrogenase activity, is further isomerized into keto-oxaloacetate. The chain is Succinate dehydrogenase [ubiquinone] cytochrome b small subunit, mitochondrial (SDHD) from Homo sapiens (Human).